The following is a 198-amino-acid chain: Ribonuclease HII (198 aa).

In terms of domain architecture, RNase H type-2 spans 10 to 198; that stretch reads HLVAGVDEVG…PVKRALGLVS (189 aa). Positions 16, 17, and 108 each coordinate a divalent metal cation.

Belongs to the RNase HII family. The cofactor is Mn(2+). It depends on Mg(2+) as a cofactor.

It is found in the cytoplasm. It carries out the reaction Endonucleolytic cleavage to 5'-phosphomonoester.. Functionally, endonuclease that specifically degrades the RNA of RNA-DNA hybrids. This chain is Ribonuclease HII, found in Salmonella schwarzengrund (strain CVM19633).